Reading from the N-terminus, the 303-residue chain is N-acetyl-D-glucosamine kinase (303 aa).

ATP is bound by residues 4-11 and 133-140; these read GFDIGGTK and GVGGGLVL. His157, Cys177, Cys179, and Cys184 together coordinate Zn(2+).

This sequence belongs to the ROK (NagC/XylR) family. NagK subfamily.

The catalysed reaction is N-acetyl-D-glucosamine + ATP = N-acetyl-D-glucosamine 6-phosphate + ADP + H(+). Its pathway is cell wall biogenesis; peptidoglycan recycling. Functionally, catalyzes the phosphorylation of N-acetyl-D-glucosamine (GlcNAc) derived from cell-wall degradation, yielding GlcNAc-6-P. The polypeptide is N-acetyl-D-glucosamine kinase (Salmonella paratyphi B (strain ATCC BAA-1250 / SPB7)).